Reading from the N-terminus, the 161-residue chain is Putative pre-16S rRNA nuclease (161 aa).

The protein belongs to the YqgF nuclease family.

It localises to the cytoplasm. Functionally, could be a nuclease involved in processing of the 5'-end of pre-16S rRNA. The chain is Putative pre-16S rRNA nuclease from Bradyrhizobium diazoefficiens (strain JCM 10833 / BCRC 13528 / IAM 13628 / NBRC 14792 / USDA 110).